The primary structure comprises 151 residues: 3-hydroxyacyl-[acyl-carrier-protein] dehydratase FabZ (151 aa).

H49 is an active-site residue.

It belongs to the thioester dehydratase family. FabZ subfamily.

Its subcellular location is the cytoplasm. The catalysed reaction is a (3R)-hydroxyacyl-[ACP] = a (2E)-enoyl-[ACP] + H2O. Its function is as follows. Involved in unsaturated fatty acids biosynthesis. Catalyzes the dehydration of short chain beta-hydroxyacyl-ACPs and long chain saturated and unsaturated beta-hydroxyacyl-ACPs. The protein is 3-hydroxyacyl-[acyl-carrier-protein] dehydratase FabZ of Bordetella parapertussis (strain 12822 / ATCC BAA-587 / NCTC 13253).